Reading from the N-terminus, the 309-residue chain is Glutaminase (309 aa).

Residues S64, N114, E160, N167, Y191, Y243, and V261 each contribute to the substrate site.

This sequence belongs to the glutaminase family. As to quaternary structure, homotetramer.

The enzyme catalyses L-glutamine + H2O = L-glutamate + NH4(+). This Agrobacterium fabrum (strain C58 / ATCC 33970) (Agrobacterium tumefaciens (strain C58)) protein is Glutaminase.